We begin with the raw amino-acid sequence, 58 residues long: UPF0391 membrane protein Gbem_0127 (58 aa).

A run of 2 helical transmembrane segments spans residues 4-24 (WALI…GGIA) and 33-53 (ILFY…LLAG).

This sequence belongs to the UPF0391 family.

It localises to the cell membrane. The chain is UPF0391 membrane protein Gbem_0127 from Citrifermentans bemidjiense (strain ATCC BAA-1014 / DSM 16622 / JCM 12645 / Bem) (Geobacter bemidjiensis).